The following is a 291-amino-acid chain: ATP synthase gamma chain (291 aa).

Belongs to the ATPase gamma chain family. In terms of assembly, F-type ATPases have 2 components, CF(1) - the catalytic core - and CF(0) - the membrane proton channel. CF(1) has five subunits: alpha(3), beta(3), gamma(1), delta(1), epsilon(1). CF(0) has three main subunits: a, b and c.

It is found in the cell inner membrane. Produces ATP from ADP in the presence of a proton gradient across the membrane. The gamma chain is believed to be important in regulating ATPase activity and the flow of protons through the CF(0) complex. The polypeptide is ATP synthase gamma chain (Neisseria meningitidis serogroup C / serotype 2a (strain ATCC 700532 / DSM 15464 / FAM18)).